The following is a 65-amino-acid chain: Toxin AaHIT4 (65 aa).

The LCN-type CS-alpha/beta domain maps to 1–64 (EHGYLLNKYT…LWNYKTNKCD (64 aa)). Cystine bridges form between C12–C63, C16–C38, C23–C45, and C27–C47.

It belongs to the long (4 C-C) scorpion toxin superfamily. Sodium channel inhibitor family. As to expression, expressed by the venom gland.

Its subcellular location is the secreted. Has a toxic effect on insects and mammals and is capable of competing with anti-insect scorpion toxins for binding to the sodium channel (Nav) of insects. It also modulates the binding of alpha-type and beta-type anti-mammal scorpion toxins to the mammal sodium channel. It may act on both site 3 and site 4 of voltage-gated sodium channels. This chain is Toxin AaHIT4, found in Androctonus australis (Sahara scorpion).